We begin with the raw amino-acid sequence, 253 residues long: POU Class 2 homeobox-associating factor 3 (253 aa).

The OCA domain occupies 5–27; sequence PKVYQGVRVKMTVKELLQQRRAH.

Belongs to the POU2AF family. In terms of assembly, interacts with POU2F3 in a DNA-dependent manner; this interaction increases POU2F3 transactivation activity. Expressed in tuft cells.

Its subcellular location is the cytoplasm. The protein localises to the nucleus. Transcriptional coactivator that specifically associates with POU2F3. This complex drives the development of tuft cells, a rare a rare chemosensory cells that coordinate immune and neural functions within mucosal epithelial tissues. The chain is POU Class 2 homeobox-associating factor 3 from Mus musculus (Mouse).